We begin with the raw amino-acid sequence, 748 residues long: Putative pre-mRNA-splicing factor ATP-dependent RNA helicase DHX32 (748 aa).

A Helicase ATP-binding domain is found at 74–240; it reads LEHLAHNQIV…YGNAPLVEAE (167 aa). 87 to 94 serves as a coordination point for ATP; it reads AGPKSGKS. The region spanning 263 to 439 is the Helicase C-terminal domain; the sequence is RLLFEIHHTK…SMVLFLKRMD (177 aa). The interval 706 to 748 is disordered; the sequence is SETKDLLQQDQTPDTPPTEEPREEEPLHEANDEGTAEQRCIIQ.

This sequence belongs to the DEAD box helicase family. DEAH subfamily.

Its subcellular location is the nucleus. The protein resides in the mitochondrion. The enzyme catalyses ATP + H2O = ADP + phosphate + H(+). In Xenopus laevis (African clawed frog), this protein is Putative pre-mRNA-splicing factor ATP-dependent RNA helicase DHX32 (dhx32).